A 122-amino-acid polypeptide reads, in one-letter code: Large ribosomal subunit protein uL18 (122 aa).

This sequence belongs to the universal ribosomal protein uL18 family. Part of the 50S ribosomal subunit; part of the 5S rRNA/L5/L18/L25 subcomplex. Contacts the 5S and 23S rRNAs.

Its function is as follows. This is one of the proteins that bind and probably mediate the attachment of the 5S RNA into the large ribosomal subunit, where it forms part of the central protuberance. This Geotalea uraniireducens (strain Rf4) (Geobacter uraniireducens) protein is Large ribosomal subunit protein uL18.